We begin with the raw amino-acid sequence, 438 residues long: Glutamate-1-semialdehyde 2,1-aminomutase (438 aa).

Position 272 is an N6-(pyridoxal phosphate)lysine (lysine 272).

The protein belongs to the class-III pyridoxal-phosphate-dependent aminotransferase family. HemL subfamily. Homodimer. Requires pyridoxal 5'-phosphate as cofactor.

The protein localises to the cytoplasm. It catalyses the reaction (S)-4-amino-5-oxopentanoate = 5-aminolevulinate. It functions in the pathway porphyrin-containing compound metabolism; protoporphyrin-IX biosynthesis; 5-aminolevulinate from L-glutamyl-tRNA(Glu): step 2/2. It participates in porphyrin-containing compound metabolism; chlorophyll biosynthesis. This chain is Glutamate-1-semialdehyde 2,1-aminomutase, found in Chloroflexus aggregans (strain MD-66 / DSM 9485).